The primary structure comprises 351 residues: Ferrochelatase (351 aa).

Residues His-184 and Glu-265 each coordinate Fe cation.

Belongs to the ferrochelatase family.

It localises to the cytoplasm. The enzyme catalyses heme b + 2 H(+) = protoporphyrin IX + Fe(2+). It functions in the pathway porphyrin-containing compound metabolism; protoheme biosynthesis; protoheme from protoporphyrin-IX: step 1/1. Its function is as follows. Catalyzes the ferrous insertion into protoporphyrin IX. The protein is Ferrochelatase of Rhodopirellula baltica (strain DSM 10527 / NCIMB 13988 / SH1).